A 158-amino-acid chain; its full sequence is Non-secretory ribonuclease (158 aa).

Residues 1–27 form the signal peptide; that stretch reads MVPKLFTSQICLLLLLGLLGVEGSLHA. His-42 acts as the Proton acceptor in catalysis. 4 disulfides stabilise this stretch: Cys-50/Cys-110, Cys-64/Cys-121, Cys-82/Cys-136, and Cys-89/Cys-98. Tyr-60 carries the 3'-nitrotyrosine modification. 65–69 is a substrate binding site; it reads KNQNT. N-linked (GlcNAc...) asparagine glycans are attached at residues Asn-86, Asn-92, and Asn-111. His-153 (proton donor) is an active-site residue.

The protein belongs to the pancreatic ribonuclease family. As to quaternary structure, interacts with and forms a tight 1:1 complex with RNH1. Dimerization of two such complexes may occur.

It localises to the lysosome. It is found in the cytoplasmic granule. It carries out the reaction an [RNA] containing cytidine + H2O = an [RNA]-3'-cytidine-3'-phosphate + a 5'-hydroxy-ribonucleotide-3'-[RNA].. The enzyme catalyses an [RNA] containing uridine + H2O = an [RNA]-3'-uridine-3'-phosphate + a 5'-hydroxy-ribonucleotide-3'-[RNA].. This is a non-secretory ribonuclease. It is a pyrimidine specific nuclease with a slight preference for U. Cytotoxin and helminthotoxin. Possesses a wide variety of biological activities. In Aotus trivirgatus (Three-striped night monkey), this protein is Non-secretory ribonuclease (RNASE2).